Reading from the N-terminus, the 110-residue chain is Parvalbumin alpha (110 aa).

The residue at position 2 (serine 2) is an N-acetylserine. Residues serine 2, serine 8, and serine 24 each carry the phosphoserine modification. EF-hand domains lie at 39 to 74 and 78 to 110; these read KSAD…FSSD and LSAK…VAES. Residues aspartate 52, aspartate 54, serine 56, phenylalanine 58, glutamate 60, and glutamate 63 each coordinate Ca(2+). A Phosphoserine modification is found at serine 66. Positions 91, 93, 95, 97, and 102 each coordinate Ca(2+).

In terms of biological role, in muscle, parvalbumin is thought to be involved in relaxation after contraction. It binds two calcium ions. The protein is Parvalbumin alpha (Pvalb) of Rattus norvegicus (Rat).